The chain runs to 149 residues: Protein SprT-like (149 aa).

Positions 4 to 143 (TDYVKQVSLE…CGLCRGKLLL (140 aa)) constitute a SprT-like domain. Histidine 64 contributes to the Zn(2+) binding site. Glutamate 65 is a catalytic residue. Position 68 (histidine 68) interacts with Zn(2+).

It belongs to the SprT family. Requires Zn(2+) as cofactor.

It is found in the cytoplasm. This Streptococcus pneumoniae (strain JJA) protein is Protein SprT-like.